The chain runs to 137 residues: Actin-depolymerizing factor 2 (137 aa).

Positions 5–137 (ASGMAVHDDC…GLDVFKSRTN (133 aa)) constitute an ADF-H domain. S6 carries the post-translational modification Phosphoserine.

Belongs to the actin-binding proteins ADF family. As to quaternary structure, interacts with AIP1-1.

The protein localises to the cytoplasm. It localises to the cytoskeleton. In terms of biological role, actin-depolymerizing protein. Severs actin filaments (F-actin) and binds to actin monomers. Required for normal cell growth, plant development, cell organ expansion and flowering. Essential for root-knot nematode infection. In Arabidopsis thaliana (Mouse-ear cress), this protein is Actin-depolymerizing factor 2 (ADF2).